The sequence spans 231 residues: uncharacterized protein (231 aa).

Helical transmembrane passes span 36–56 (SLLA…SFFI), 58–78 (SQVT…ALQW), 83–103 (APLN…TLTP), 143–163 (FTVM…ASLL), and 170–190 (SIVN…YILY).

The protein belongs to the BI1 family.

The protein localises to the cell membrane. This is an uncharacterized protein from Campylobacter jejuni subsp. jejuni serotype O:2 (strain ATCC 700819 / NCTC 11168).